Here is a 136-residue protein sequence, read N- to C-terminus: Nuclear receptor 2C2-associated protein (136 aa).

Belongs to the NR2C2AP family.

The protein resides in the nucleus. May act as a repressor of nr2c2-mediated transactivation by suppressing the binding between nr2c2 and its response element in target genes. This Xenopus laevis (African clawed frog) protein is Nuclear receptor 2C2-associated protein (nr2c2ap).